Reading from the N-terminus, the 478-residue chain is ATP synthase subunit beta (478 aa).

164 to 171 lines the ATP pocket; that stretch reads GGAGVGKT.

Belongs to the ATPase alpha/beta chains family. F-type ATPases have 2 components, CF(1) - the catalytic core - and CF(0) - the membrane proton channel. CF(1) has five subunits: alpha(3), beta(3), gamma(1), delta(1), epsilon(1). CF(0) has three main subunits: a(1), b(2) and c(9-12). The alpha and beta chains form an alternating ring which encloses part of the gamma chain. CF(1) is attached to CF(0) by a central stalk formed by the gamma and epsilon chains, while a peripheral stalk is formed by the delta and b chains.

The protein resides in the cell membrane. The catalysed reaction is ATP + H2O + 4 H(+)(in) = ADP + phosphate + 5 H(+)(out). Its function is as follows. Produces ATP from ADP in the presence of a proton gradient across the membrane. The catalytic sites are hosted primarily by the beta subunits. The protein is ATP synthase subunit beta of Corynebacterium kroppenstedtii (strain DSM 44385 / JCM 11950 / CIP 105744 / CCUG 35717).